The sequence spans 365 residues: Mitogen-activated protein kinase p38b (365 aa).

In terms of domain architecture, Protein kinase spans 24–311; sequence YQNLQPVGQG…AEQALAHPYM (288 aa). ATP contacts are provided by residues 30-38 and K53; that span reads VGQGAYGQV. Residue D153 is the Proton acceptor of the active site. Position 183 is a phosphothreonine (T183). The short motif at 183–185 is the TXY element; it reads TGY. Y185 is subject to Phosphotyrosine.

Belongs to the protein kinase superfamily. CMGC Ser/Thr protein kinase family. MAP kinase subfamily. Mg(2+) serves as cofactor. In terms of processing, dually phosphorylated on Thr-183 and Tyr-185, which activates the enzyme. In terms of tissue distribution, at mid-embryogenesis, highest expression is seen in developing anterior and posterior midguts. Almost ubiquitous expression throughout all development.

Its subcellular location is the nucleus. It carries out the reaction L-seryl-[protein] + ATP = O-phospho-L-seryl-[protein] + ADP + H(+). The catalysed reaction is L-threonyl-[protein] + ATP = O-phospho-L-threonyl-[protein] + ADP + H(+). Its activity is regulated as follows. Activated by threonine and tyrosine phosphorylation by Mkk3. Functionally, kinase involved in dpp signal transduction pathway in the process of wing morphogenesis when the levels of dpp are enhanced or inhibited. May down-regulate insect immunity gene expression after prolonged infection. The protein is Mitogen-activated protein kinase p38b of Drosophila melanogaster (Fruit fly).